Consider the following 357-residue polypeptide: Aspartate carbamoyltransferase catalytic subunit (357 aa).

Residues 1 to 17 (MSNSIDSQSIPTISPTD) show a composition bias toward polar residues. The segment at 1 to 21 (MSNSIDSQSIPTISPTDYTKF) is disordered. The carbamoyl phosphate site is built by R97 and T98. K125 serves as a coordination point for L-aspartate. 3 residues coordinate carbamoyl phosphate: R147, H177, and Q180. Residues R211 and R266 each coordinate L-aspartate. Residues G307 and P308 each contribute to the carbamoyl phosphate site.

Belongs to the aspartate/ornithine carbamoyltransferase superfamily. ATCase family. Heterododecamer (2C3:3R2) of six catalytic PyrB chains organized as two trimers (C3), and six regulatory PyrI chains organized as three dimers (R2).

The catalysed reaction is carbamoyl phosphate + L-aspartate = N-carbamoyl-L-aspartate + phosphate + H(+). It participates in pyrimidine metabolism; UMP biosynthesis via de novo pathway; (S)-dihydroorotate from bicarbonate: step 2/3. Its function is as follows. Catalyzes the condensation of carbamoyl phosphate and aspartate to form carbamoyl aspartate and inorganic phosphate, the committed step in the de novo pyrimidine nucleotide biosynthesis pathway. The protein is Aspartate carbamoyltransferase catalytic subunit of Psychrobacter arcticus (strain DSM 17307 / VKM B-2377 / 273-4).